The sequence spans 370 residues: DNA primase small subunit PriS (370 aa).

Residues Asp-92, Asp-94, and Asp-272 contribute to the active site.

The protein belongs to the eukaryotic-type primase small subunit family. In terms of assembly, heterodimer of a small subunit (PriS) and a large subunit (PriL). Mg(2+) is required as a cofactor. Requires Mn(2+) as cofactor.

In terms of biological role, catalytic subunit of DNA primase, an RNA polymerase that catalyzes the synthesis of short RNA molecules used as primers for DNA polymerase during DNA replication. The small subunit contains the primase catalytic core and has DNA synthesis activity on its own. Binding to the large subunit stabilizes and modulates the activity, increasing the rate of DNA synthesis while decreasing the length of the DNA fragments, and conferring RNA synthesis capability. The DNA polymerase activity may enable DNA primase to also catalyze primer extension after primer synthesis. May also play a role in DNA repair. In Picrophilus torridus (strain ATCC 700027 / DSM 9790 / JCM 10055 / NBRC 100828 / KAW 2/3), this protein is DNA primase small subunit PriS.